The sequence spans 356 residues: S-adenosylmethionine:tRNA ribosyltransferase-isomerase (356 aa).

It belongs to the QueA family. In terms of assembly, monomer.

Its subcellular location is the cytoplasm. It catalyses the reaction 7-aminomethyl-7-carbaguanosine(34) in tRNA + S-adenosyl-L-methionine = epoxyqueuosine(34) in tRNA + adenine + L-methionine + 2 H(+). It participates in tRNA modification; tRNA-queuosine biosynthesis. Functionally, transfers and isomerizes the ribose moiety from AdoMet to the 7-aminomethyl group of 7-deazaguanine (preQ1-tRNA) to give epoxyqueuosine (oQ-tRNA). In Ralstonia nicotianae (strain ATCC BAA-1114 / GMI1000) (Ralstonia solanacearum), this protein is S-adenosylmethionine:tRNA ribosyltransferase-isomerase.